The following is a 391-amino-acid chain: S-adenosylmethionine synthase (391 aa).

Histidine 14 contributes to the ATP binding site. A Mg(2+)-binding site is contributed by aspartate 16. Glutamate 42 provides a ligand contact to K(+). Residues glutamate 55 and glutamine 98 each coordinate L-methionine. Residues 98-108 (QSADIAMGVDE) are flexible loop. ATP-binding positions include 172–174 (DGK), 238–239 (RF), aspartate 247, 253–254 (RK), alanine 270, and lysine 274. Residue aspartate 247 participates in L-methionine binding. An L-methionine-binding site is contributed by lysine 278.

It belongs to the AdoMet synthase family. In terms of assembly, homotetramer; dimer of dimers. Requires Mg(2+) as cofactor. The cofactor is K(+).

Its subcellular location is the cytoplasm. The catalysed reaction is L-methionine + ATP + H2O = S-adenosyl-L-methionine + phosphate + diphosphate. The protein operates within amino-acid biosynthesis; S-adenosyl-L-methionine biosynthesis; S-adenosyl-L-methionine from L-methionine: step 1/1. Its function is as follows. Catalyzes the formation of S-adenosylmethionine (AdoMet) from methionine and ATP. The overall synthetic reaction is composed of two sequential steps, AdoMet formation and the subsequent tripolyphosphate hydrolysis which occurs prior to release of AdoMet from the enzyme. The polypeptide is S-adenosylmethionine synthase (Clostridium botulinum (strain Alaska E43 / Type E3)).